The chain runs to 496 residues: Probable cytosol aminopeptidase (496 aa).

Mn(2+)-binding residues include Lys-264 and Asp-269. Lys-276 is an active-site residue. 3 residues coordinate Mn(2+): Asp-287, Asp-346, and Glu-348. Arg-350 is an active-site residue.

Belongs to the peptidase M17 family. Requires Mn(2+) as cofactor.

It localises to the cytoplasm. The enzyme catalyses Release of an N-terminal amino acid, Xaa-|-Yaa-, in which Xaa is preferably Leu, but may be other amino acids including Pro although not Arg or Lys, and Yaa may be Pro. Amino acid amides and methyl esters are also readily hydrolyzed, but rates on arylamides are exceedingly low.. It catalyses the reaction Release of an N-terminal amino acid, preferentially leucine, but not glutamic or aspartic acids.. In terms of biological role, presumably involved in the processing and regular turnover of intracellular proteins. Catalyzes the removal of unsubstituted N-terminal amino acids from various peptides. The chain is Probable cytosol aminopeptidase from Geobacter sulfurreducens (strain ATCC 51573 / DSM 12127 / PCA).